The following is a 131-amino-acid chain: Lysozyme C (131 aa).

The region spanning 2–131 (KIYEQCELAR…VSQWIKGCKL (130 aa)) is the C-type lysozyme domain. 4 cysteine pairs are disulfide-bonded: C7/C129, C31/C117, C66/C82, and C78/C96. Active-site residues include E36 and D54.

Belongs to the glycosyl hydrolase 22 family. Monomer.

Its subcellular location is the secreted. The catalysed reaction is Hydrolysis of (1-&gt;4)-beta-linkages between N-acetylmuramic acid and N-acetyl-D-glucosamine residues in a peptidoglycan and between N-acetyl-D-glucosamine residues in chitodextrins.. Lysozymes have primarily a bacteriolytic function; those in tissues and body fluids are associated with the monocyte-macrophage system and enhance the activity of immunoagents. Has strong bacteriolytic activity against M.luteus and V.cholerae, weak bacteriolytic activity against P.aeruginosa and no activity against A.hydrophila. This Pelodiscus sinensis (Chinese softshell turtle) protein is Lysozyme C (LYZ).